A 197-amino-acid chain; its full sequence is Chaperone protein dnaJ 20, chloroplastic (197 aa).

The N-terminal 60 residues, 1 to 60 (MKCYKSSSILSTNHHPFFYKQQPISSLQPTSIPTTISYPTRTRFSSTRIQSRLTHDDPVK), are a transit peptide targeting the chloroplast. A J domain is found at 66–133 (SFYDLLGVTE…RRRVLYDRDL (68 aa)). A disordered region spans residues 169–197 (SGLRRRSNQKDNNTMSWAARMRRQQQESS).

This sequence belongs to the DnaJ family. C/III subfamily. Light-grown seedlings.

It is found in the plastid. It localises to the chloroplast. Functionally, plays a continuous role in plant development probably in the structural organization of compartments. This is Chaperone protein dnaJ 20, chloroplastic (ATJ20) from Arabidopsis thaliana (Mouse-ear cress).